The sequence spans 308 residues: Probable manganese-dependent inorganic pyrophosphatase (308 aa).

Residues histidine 9, aspartate 13, aspartate 15, aspartate 75, histidine 97, and aspartate 149 each contribute to the Mn(2+) site.

Belongs to the PPase class C family. Mn(2+) is required as a cofactor.

Its subcellular location is the cytoplasm. It carries out the reaction diphosphate + H2O = 2 phosphate + H(+). The chain is Probable manganese-dependent inorganic pyrophosphatase from Listeria welshimeri serovar 6b (strain ATCC 35897 / DSM 20650 / CCUG 15529 / CIP 8149 / NCTC 11857 / SLCC 5334 / V8).